The chain runs to 401 residues: MIYQPPAGARDVLPLEVAQKRWIEQRLQQTFHRWSYQQIITPTLERLETLMAGGAIQPETVIQFWDAEEGLLGLRPELTASIARAAVTRMAGAIYPQRLYYSANIFRRSPGMELSSQQEFFQTGVELLGGSGLADGEILLLLQDCLHSLGLPEWHVVLGEAGLTRSLLSNFPLELQPHIRQAIARLDRVALTELPSDLRQPALDLLDLRGEPASVLQRLAQLDLKPEQRQIVHHLKTLLELVGDRFPLTLDLSLIQTFDYYTGIVFDVIATGEREQRLLGEGGRYDQLLARYHPGGESLPGIGFALNLEDLHQVLLPTGQLPQQMPTSQWLIVPVHPEAIAAAFSYAEKLRGQPESQELRVEMALEWLSPEATREYARCRQITYIAWIEADGSPQIEAVKG.

Belongs to the class-II aminoacyl-tRNA synthetase family. HisZ subfamily. As to quaternary structure, heteromultimer composed of HisG and HisZ subunits.

The protein localises to the cytoplasm. It functions in the pathway amino-acid biosynthesis; L-histidine biosynthesis; L-histidine from 5-phospho-alpha-D-ribose 1-diphosphate: step 1/9. In terms of biological role, required for the first step of histidine biosynthesis. May allow the feedback regulation of ATP phosphoribosyltransferase activity by histidine. This Cyanothece sp. (strain PCC 7425 / ATCC 29141) protein is ATP phosphoribosyltransferase regulatory subunit.